The following is a 143-amino-acid chain: Nucleoside diphosphate kinase (143 aa).

6 residues coordinate ATP: Lys-11, Phe-59, Arg-87, Thr-93, Arg-104, and Asn-114. His-117 acts as the Pros-phosphohistidine intermediate in catalysis.

The protein belongs to the NDK family. In terms of assembly, homotetramer. Requires Mg(2+) as cofactor.

It localises to the cytoplasm. The catalysed reaction is a 2'-deoxyribonucleoside 5'-diphosphate + ATP = a 2'-deoxyribonucleoside 5'-triphosphate + ADP. It catalyses the reaction a ribonucleoside 5'-diphosphate + ATP = a ribonucleoside 5'-triphosphate + ADP. Its function is as follows. Major role in the synthesis of nucleoside triphosphates other than ATP. The ATP gamma phosphate is transferred to the NDP beta phosphate via a ping-pong mechanism, using a phosphorylated active-site intermediate. This chain is Nucleoside diphosphate kinase, found in Shewanella denitrificans (strain OS217 / ATCC BAA-1090 / DSM 15013).